Here is a 988-residue protein sequence, read N- to C-terminus: Band 4.1-like protein 2 (988 aa).

The segment at 1-190 (MTTEVGSASE…GAAKRETKEV (190 aa)) is disordered. Thr2 carries the post-translational modification N-acetylthreonine. Ser7 is subject to Phosphoserine. Residues 22 to 31 (ASKEKAKEVE) are compositionally biased toward basic and acidic residues. 3 positions are modified to phosphoserine: Ser38, Ser86, and Ser116. Composition is skewed to basic and acidic residues over residues 110 to 148 (ILGKEESLPEEESRAKGDAEEMAQRKHLEVQVEVREAKP) and 160 to 190 (EEVRKDKEETIQDTQEEKLEGGAAKRETKEV). Ser201, Ser379, Ser395, Ser492, Ser543, Ser555, Ser561, and Ser582 each carry phosphoserine. The 282-residue stretch at 211–492 (VLAKVTLLDG…EHHTFYRLVS (282 aa)) folds into the FERM domain. The interval 495–651 (QPPKTKFLTL…TPEPRPSEWE (157 aa)) is hydrophilic. A disordered region spans residues 514 to 594 (TQAQTREAST…KATPLPAEGK (81 aa)). Low complexity predominate over residues 555-567 (SPPGEGSVPGPGV). Tyr606 is subject to Phosphotyrosine. Ser610 and Ser630 each carry phosphoserine. Disordered regions lie at residues 639–788 (MAST…QAGA) and 804–839 (QKLPGEKGAHGGTAEQDPREEAEEDPHRVNGEVPHL). A spectrin--actin-binding region spans residues 652-837 (KRRVTPLPFQ…DPHRVNGEVP (186 aa)). The segment covering 673–686 (VEEKKRAEVGKDES) has biased composition (basic and acidic residues). Ser698 is modified (phosphoserine). The span at 704–717 (GETRKVEPVAHKDS) shows a compositional bias: basic and acidic residues. Residues 718–729 (TSLSSESSSSSS) show a composition bias toward low complexity. Residues 739 to 751 (QPHHRVTEGTIRE) show a composition bias toward basic and acidic residues. Thr745 carries the phosphothreonine modification. The span at 752–764 (EQEECDEELEEEP) shows a compositional bias: acidic residues. Over residues 828–839 (DPHRVNGEVPHL) the composition is skewed to basic and acidic residues. Residues 838-988 (HLDLDGLPEI…ETELAEEGEE (151 aa)) form a C-terminal (CTD) region.

In terms of assembly, interacts with FCGR1A. Interacts with TRPC4. Interacts (via CTD domain) with FKBP2. Interacts with NUMA1; this interaction is negatively regulated by CDK1 during metaphase and promotes anaphase-specific localization of NUMA1 in symmetrically dividing cells. In terms of tissue distribution, widely expressed.

The protein localises to the cytoplasm. It is found in the cytoskeleton. The protein resides in the cell cortex. Its subcellular location is the cell membrane. Required for dynein-dynactin complex and NUMA1 recruitment at the mitotic cell cortex during anaphase. This Mus musculus (Mouse) protein is Band 4.1-like protein 2.